The chain runs to 376 residues: Phytanoyl-CoA hydroxylase interacting protein-like (376 aa).

Phosphoserine occurs at positions 12 and 15. Asn23 carries an N-linked (GlcNAc...) asparagine glycan. Ser25 carries the phosphoserine modification. An N-linked (GlcNAc...) asparagine glycan is attached at Asn37. The Fibronectin type-III domain maps to Val52–Tyr161.

The protein belongs to the PHYHIP family.

In terms of biological role, may play a role in the development of the central system. The protein is Phytanoyl-CoA hydroxylase interacting protein-like (PHYHIPL) of Bos taurus (Bovine).